Reading from the N-terminus, the 860-residue chain is Glucans biosynthesis glucosyltransferase H (860 aa).

Transmembrane regions (helical) follow at residues 141–161 (FILL…MKGI), 187–207 (VLPY…FCWV), 515–535 (VFLT…FLVL), 572–592 (LFST…MLIW), 599–619 (FGGV…SVLL), and 682–702 (FLWW…VSVI).

It belongs to the glycosyltransferase 2 family. OpgH subfamily.

The protein localises to the cell inner membrane. It participates in glycan metabolism; osmoregulated periplasmic glucan (OPG) biosynthesis. Involved in the biosynthesis of osmoregulated periplasmic glucans (OPGs). The polypeptide is Glucans biosynthesis glucosyltransferase H (Pseudomonas paraeruginosa (strain DSM 24068 / PA7) (Pseudomonas aeruginosa (strain PA7))).